The primary structure comprises 504 residues: Maturase K (504 aa).

The protein belongs to the intron maturase 2 family. MatK subfamily.

It is found in the plastid. Its subcellular location is the chloroplast. Its function is as follows. Usually encoded in the trnK tRNA gene intron. Probably assists in splicing its own and other chloroplast group II introns. This Lepidium virginicum (Virginia pepperweed) protein is Maturase K.